The primary structure comprises 150 residues: Large ribosomal subunit protein bL9 (150 aa).

Belongs to the bacterial ribosomal protein bL9 family.

Functionally, binds to the 23S rRNA. The sequence is that of Large ribosomal subunit protein bL9 from Streptococcus pyogenes serotype M6 (strain ATCC BAA-946 / MGAS10394).